We begin with the raw amino-acid sequence, 428 residues long: MDILQDLESRGLIHQTTDRERLEKHLQNNQVTLYCGFDPTADSLHIGHLVPLTMLKRFQQAGHKPIALVGGGTGMIGDPSGRSSERSLNAPEVVHGFTSKLQQQIAKLVDMESNASENTVVARNNHDWLGNMTIIDFLRDAGKHFGINYMLAKESVSARIEQGITFTEFSYMILQSLDYLKLYEEENCTLQIGGSDQWGNITAGMELIRRSRENLDENIEVFGLTVPLITKADGTKFGKTAGNAIWLDASKTSPYEFYQFWFNTDDRDVIRFIRYFTFLSVEEITELEKEVETQPEKRVAQKRLAEEMTKTVHDEAALEQAKRITNALFSGDIKQLNVEEVEQAFKDVPNHIITREPVGLIDLLVDAKISSSKRQAREDVKNGAIYINGERVQDMNYHVEEKDHLGNKFTVVRRGKKKYFLIQVESIS.

Y34 is a binding site for L-tyrosine. Positions 39–48 (PTADSLHIGH) match the 'HIGH' region motif. Positions 171 and 175 each coordinate L-tyrosine. The short motif at 236–240 (KFGKT) is the 'KMSKS' region element. K239 is an ATP binding site. An S4 RNA-binding domain is found at 358 to 424 (VGLIDLLVDA…GKKKYFLIQV (67 aa)).

The protein belongs to the class-I aminoacyl-tRNA synthetase family. TyrS type 1 subfamily. In terms of assembly, homodimer.

It is found in the cytoplasm. It catalyses the reaction tRNA(Tyr) + L-tyrosine + ATP = L-tyrosyl-tRNA(Tyr) + AMP + diphosphate + H(+). Functionally, catalyzes the attachment of tyrosine to tRNA(Tyr) in a two-step reaction: tyrosine is first activated by ATP to form Tyr-AMP and then transferred to the acceptor end of tRNA(Tyr). This chain is Tyrosine--tRNA ligase, found in Oceanobacillus iheyensis (strain DSM 14371 / CIP 107618 / JCM 11309 / KCTC 3954 / HTE831).